The sequence spans 286 residues: Undecaprenyl-diphosphatase (286 aa).

A run of 8 helical transmembrane segments spans residues 17–37, 49–69, 98–118, 126–146, 159–179, 204–224, 232–252, and 261–281; these read VVLGIVQGLTEFLPISSTAHL, PGVAVTAVIQLGSIAAVIGYF, IAIAVGTLPVVVAGLLIKLFW, LRSVASIGIVSIVMALLLALA, VQGLDGVVVGLAQALAIIPGV, FLLGIPAITLAGLVELKGAFA, LPMLLGILSAAVVSWLAIAWL, and TWPFVIYRLVFGVVLLALVLA.

It belongs to the UppP family.

Its subcellular location is the cell inner membrane. It catalyses the reaction di-trans,octa-cis-undecaprenyl diphosphate + H2O = di-trans,octa-cis-undecaprenyl phosphate + phosphate + H(+). Its function is as follows. Catalyzes the dephosphorylation of undecaprenyl diphosphate (UPP). Confers resistance to bacitracin. The protein is Undecaprenyl-diphosphatase of Synechococcus sp. (strain RCC307).